Consider the following 455-residue polypeptide: Vimentin (455 aa).

A head region spans residues 1–87; it reads MASRTNTSSY…GLADAINTEF (87 aa). Residues 87-122 are a coiled coil; it reads FKTNRTNEKAEMQHLNDRFASYIDKVRFLEQQNKIL. The segment at 88 to 122 is coil 1A; sequence KTNRTNEKAEMQHLNDRFASYIDKVRFLEQQNKIL. An IF rod domain is found at 94–402; that stretch reads EKAEMQHLND…KLLEGEESRI (309 aa). Residues 123 to 144 form a linker 1 region; sequence IAELEQMRGKGSSRVGDLYQDE. Residues 145–236 adopt a coiled-coil conformation; that stretch reads MRELRRQVDQ…KLHDEELAEL (92 aa). Residues 145–236 form a coil 1B region; that stretch reads MRELRRQVDQ…KLHDEELAEL (92 aa). Positions 237 to 259 are linker 12; it reads QIQIQEQHVQIDMEVAKPDLTAA. The coil 2 stretch occupies residues 260–398; the sequence is LKDVRQQYET…ATYRKLLEGE (139 aa). Residues 294-398 are a coiled coil; that stretch reads ARNNEAIRLA…ATYRKLLEGE (105 aa). The segment at 399–455 is tail; that stretch reads ESRITTPFPNLSSLTLRETMKETRPAMDSLSKKVVIKTIETRDGHIINESSQNDDLE.

The protein belongs to the intermediate filament family. Homomer assembled from elementary dimers. One of the most prominent phosphoproteins in various cells of mesenchymal origin. Phosphorylation is enhanced during cell division, at which time vimentin filaments are significantly reorganized.

It localises to the cytoplasm. It is found in the cytoskeleton. The protein localises to the nucleus matrix. In terms of biological role, vimentins are class-III intermediate filaments found in various non-epithelial cells, especially mesenchymal cells. Vimentin is attached to the nucleus, endoplasmic reticulum, and mitochondria, either laterally or terminally. This is Vimentin (vim) from Cyprinus carpio (Common carp).